A 31-amino-acid chain; its full sequence is Putative translational regulatory protein ArgL (31 aa).

Its function is as follows. May serve a regulatory role in expression of downstream gene argF; in an argL-argF-lacZ fusion mutation of the start codon to a stop codon in argL increases expression of beta-galactosidase. In Escherichia coli (strain K12), this protein is Putative translational regulatory protein ArgL.